The sequence spans 387 residues: Protein spaetzle 5 (387 aa).

A signal peptide spans 1 to 29 (MTKSIKRPPPFSCKQVLLTYVILAYTVAA). The propeptide occupies 30 to 284 (HSSPPPCGLY…PLKKRSRTKR (255 aa)). The segment at 133 to 197 (QTPFGGNPQR…SGGHLYINQS (65 aa)) is disordered. Residues N195 and N204 are each glycosylated (N-linked (GlcNAc...) asparagine). Disordered regions lie at residues 219-256 (KQRQ…QSKR) and 269-291 (GVEA…GRST). The span at 237–247 (QTEEAEEQDNP) shows a compositional bias: acidic residues. Over residues 276 to 286 (LKKRSRTKRQS) the composition is skewed to basic residues. In terms of domain architecture, Spaetzle spans 291–384 (TLCQTTSQFI…WFPSCCVCTI (94 aa)). Cystine bridges form between C293-C350, C331-C380, and C340-C382.

As to quaternary structure, homodimer; disulfide-linked. In terms of tissue distribution, detected in the fan-shaped body which is a component of the locomotion center in the central nervous system (CNS) (at protein level).

Neurotrophin which may function as a ligand for the Toll-related receptors Toll-6 and Toll-7. Binds to Toll-7 and Toll-6, and probably acts as their ligands in the promotion of motor axon targeting and neuronal survival in the central nervous system (CNS). Involved in synaptic targeting of ISNb/d motorneurons and also some SNa motorneurons. May be involved in the normal development of specific neurons at the neuromuscular junction. This chain is Protein spaetzle 5, found in Drosophila melanogaster (Fruit fly).